The following is a 157-amino-acid chain: MATMHDKITLQLPAKPEYVSLGRLSLSGIASRAGFSYEAIEDLKIAVSEAITNSVKHAFKGEDDGEITVEYLIYEDKLEVRVSDNGTSFDLETRKQEIGPYEVGEDAEMMRIGGLGLFLIETLMDDVKLYYDEGVSVVMTKYINEKQVEENAKSIST.

The protein belongs to the anti-sigma-factor family.

It carries out the reaction L-seryl-[protein] + ATP = O-phospho-L-seryl-[protein] + ADP + H(+). It catalyses the reaction L-threonyl-[protein] + ATP = O-phospho-L-threonyl-[protein] + ADP + H(+). Its function is as follows. Negative regulator of sigma-B activity. Phosphorylates and inactivates its specific antagonist protein, RsbV. Upon phosphorylation of RsbV, RsbW is released and binds to sigma-B, thereby blocking its ability to form an RNA polymerase holoenzyme (E-sigma-B). The polypeptide is Serine-protein kinase RsbW (Listeria monocytogenes serotype 4b (strain CLIP80459)).